The chain runs to 116 residues: uncharacterized protein (116 aa).

This sequence belongs to the mimivirus L15/L51/R83 family.

This is an uncharacterized protein from Acanthamoeba polyphaga mimivirus (APMV).